A 152-amino-acid chain; its full sequence is Acidic phospholipase A2 57 (152 aa).

Positions 1 to 21 (MYPAHLLGLLAVCVSLLGAAS) are cleaved as a signal peptide. A propeptide spanning residues 22-27 (IPPLPL) is cleaved from the precursor. Intrachain disulfides connect cysteine 38/cysteine 104, cysteine 54/cysteine 151, cysteine 56/cysteine 72, cysteine 71/cysteine 132, cysteine 78/cysteine 125, cysteine 88/cysteine 118, and cysteine 111/cysteine 123. Residues tyrosine 55, glycine 57, and glycine 59 each contribute to the Ca(2+) site. Histidine 75 is an active-site residue. Position 76 (aspartate 76) interacts with Ca(2+). Aspartate 126 is a catalytic residue.

This sequence belongs to the phospholipase A2 family. Group I subfamily. D49 sub-subfamily. It depends on Ca(2+) as a cofactor. As to expression, expressed by the venom gland.

Its subcellular location is the secreted. The enzyme catalyses a 1,2-diacyl-sn-glycero-3-phosphocholine + H2O = a 1-acyl-sn-glycero-3-phosphocholine + a fatty acid + H(+). In terms of biological role, PLA2 catalyzes the calcium-dependent hydrolysis of the 2-acyl groups in 3-sn-phosphoglycerides. The polypeptide is Acidic phospholipase A2 57 (Hydrophis hardwickii (Hardwick's spine-bellied seasnake)).